A 570-amino-acid chain; its full sequence is Sulfite reductase [NADPH] hemoprotein beta-component (570 aa).

The [4Fe-4S] cluster site is built by C434, C440, C479, and C483. A siroheme-binding site is contributed by C483.

Belongs to the nitrite and sulfite reductase 4Fe-4S domain family. As to quaternary structure, alpha(8)-beta(8). The alpha component is a flavoprotein, the beta component is a hemoprotein. It depends on siroheme as a cofactor. The cofactor is [4Fe-4S] cluster.

The catalysed reaction is hydrogen sulfide + 3 NADP(+) + 3 H2O = sulfite + 3 NADPH + 4 H(+). It functions in the pathway sulfur metabolism; hydrogen sulfide biosynthesis; hydrogen sulfide from sulfite (NADPH route): step 1/1. Its function is as follows. Component of the sulfite reductase complex that catalyzes the 6-electron reduction of sulfite to sulfide. This is one of several activities required for the biosynthesis of L-cysteine from sulfate. The polypeptide is Sulfite reductase [NADPH] hemoprotein beta-component (cysI) (Salmonella typhimurium (strain LT2 / SGSC1412 / ATCC 700720)).